The following is a 289-amino-acid chain: Stress response regulator protein 1 (289 aa).

The disordered stretch occupies residues 77–136 (LDCTNSEMDEEDDFEDDEDDENLGLINPLHHKSSHGQISDYSPLTPFTEPPSASLSKPSF). Over residues 83-98 (EMDEEDDFEDDEDDEN) the composition is skewed to acidic residues. The segment covering 127–136 (PSASLSKPSF) has biased composition (polar residues). In terms of domain architecture, Response regulatory spans 163-281 (NFLIVDDNII…YDFVMDRIDE (119 aa)). At aspartate 214 the chain carries 4-aspartylphosphate.

Its function is as follows. Required for stress adaptation, morphogenesis and virulence. In Scheffersomyces stipitis (strain ATCC 58785 / CBS 6054 / NBRC 10063 / NRRL Y-11545) (Yeast), this protein is Stress response regulator protein 1 (SRR1).